The sequence spans 270 residues: A-type potassium channel modulatory protein KCNIP2 (270 aa).

Positions 1-17 (MRGQGRKESLSDSRDLD) are enriched in basic and acidic residues. The tract at residues 1–32 (MRGQGRKESLSDSRDLDGSYDQLTGHPPGPTK) is disordered. Position 9 is a phosphoserine (Ser-9). Residues Cys-45 and Cys-46 are each lipidated (S-palmitoyl cysteine). One can recognise an EF-hand 1; degenerate domain in the interval 81-137 (FELSTVCHRPEGLEQLQEQTKFTRKELQVLYRGFKNECPSGIVNEENFKQIYSQFFP). EF-hand domains are found at residues 140 to 175 (DSST…ILRG), 176 to 211 (TVDD…IYDM), and 224 to 259 (APRE…DENI). Residues Asp-153, Asn-155, Asp-157, Ser-159, Asp-164, Asp-189, Asn-191, Asp-193, Cys-195, Glu-200, Asp-237, Asn-239, Asp-241, and Glu-248 each contribute to the Ca(2+) site. The interaction with KCND2 stretch occupies residues 257-270 (ENIMRSMQLFDNVI).

Belongs to the recoverin family. Component of heteromultimeric potassium channels. Identified in potassium channel complexes containing KCND1, KCND2, KCND3, KCNIP1, KCNIP2, KCNIP3, KCNIP4, DPP6 and DPP10. The KCND2-KCNIP2 channel complex contains four KCND2 and four KCNIP2 subunits. Interacts with KCND2. Probably part of a complex consisting of KCNIP1, KCNIP2 isoform 3 and KCND2. At least isoform 2 and isoform 3 can self-associate to form homodimers and homotetramers. Isoform 3 interacts with KCNIP1 in a calcium-dependent manner. Interacts with KCND3; each KCNIP2 monomer interacts with two adjacent KCND3 subunits, through both the N-terminal inactivation ball of a KCND3 subunit and a C-terminal helix from the adjacent KCND3 subunit, clamping them together; this interaction modulates the channel gating kinetics. In terms of processing, palmitoylated. Palmitoylation enhances association with the plasma membrane. As to expression, expressed in brain. Colocalizes with KCND2 in excitatory neurons including cortical and hippocampal CA1 pyramidal cells. Isoform 3 is expressed in heart and in umbilical vein endothelial cells. Not expressed in fetal heart.

Its subcellular location is the cell membrane. Its function is as follows. Regulatory subunit of Kv4/D (Shal)-type voltage-gated rapidly inactivating A-type potassium channels. Modulates channel density, inactivation kinetics and rate of recovery from inactivation in a calcium-dependent and isoform-specific manner. Involved in KCND2 and KCND3 trafficking to the cell surface. May be required for the expression of I(To) currents in the heart. The polypeptide is A-type potassium channel modulatory protein KCNIP2 (Homo sapiens (Human)).